The primary structure comprises 445 residues: 6-phosphogluconate dehydrogenase, decarboxylating (445 aa).

NADP(+) contacts are provided by residues 1–4, 22–24, 63–65, and asparagine 91; these read AVMG, NRS, and VKA. Residues asparagine 91 and 117-119 contribute to the substrate site; that span reads SGG. Lysine 172 serves as the catalytic Proton acceptor. Substrate is bound at residue 175–176; the sequence is HN. Glutamate 179 functions as the Proton donor in the catalytic mechanism. Substrate is bound by residues tyrosine 180, lysine 249, arginine 276, arginine 434, and histidine 440.

Belongs to the 6-phosphogluconate dehydrogenase family. As to quaternary structure, homodimer.

The enzyme catalyses 6-phospho-D-gluconate + NADP(+) = D-ribulose 5-phosphate + CO2 + NADPH. It functions in the pathway carbohydrate degradation; pentose phosphate pathway; D-ribulose 5-phosphate from D-glucose 6-phosphate (oxidative stage): step 3/3. In terms of biological role, catalyzes the oxidative decarboxylation of 6-phosphogluconate to ribulose 5-phosphate and CO(2), with concomitant reduction of NADP to NADPH. The protein is 6-phosphogluconate dehydrogenase, decarboxylating (gnd) of Raoultella terrigena (Klebsiella terrigena).